A 1129-amino-acid chain; its full sequence is Protein DWARF 53-LIKE (1129 aa).

One can recognise a Clp R domain in the interval 8-180 (ARQCLSPAAV…KLAILRPAPP (173 aa)). 2 repeat regions span residues 12-85 (LSPA…LDRL) and 102-180 (VSNS…PAPP). Residues 519–573 (RYIGVPADKERSANPSKGSESIGVQKDVIKPCAVSAVHSSSTARPISSPSVTNKR) form a disordered region. Residues 557–568 (SSSTARPISSPS) show a composition bias toward low complexity. An EAR 1 motif is present at residues 577 to 581 (LVLNL). The segment at 587-654 (KSDENLQERG…KRVEDSERSV (68 aa)) is disordered. Residues 596–608 (GMQSQHGTLSNAD) show a composition bias toward polar residues. Over residues 645–654 (KRVEDSERSV) the composition is skewed to basic and acidic residues. 2 short sequence motifs (EAR) span residues 798-802 (LDLNL) and 975-980 (FDLNLP). The segment at 975-1001 (FDLNLPVDEDEPFDADDDSSSHENSYG) is disordered. Positions 981–992 (VDEDEPFDADDD) are enriched in acidic residues.

Belongs to the ClpA/ClpB family. Post-translationally, polyubiquitinated. Strigolactone, but not karrikin, triggers rapid SCF(D3)-dependent degradation via the proteasome.

Its function is as follows. Repressor of strigolactones (SL) signaling. Subjected to a negative feedback control of SL signaling. In Oryza sativa subsp. japonica (Rice), this protein is Protein DWARF 53-LIKE.